A 231-amino-acid polypeptide reads, in one-letter code: L-ribulose-5-phosphate 4-epimerase AraD (231 aa).

Substrate-binding positions include 27–28, 44–45, and 74–75; these read GN, SG, and SS. 3 residues coordinate Zn(2+): D76, H95, and H97. D120 (proton donor/acceptor) is an active-site residue. H171 serves as a coordination point for Zn(2+). Y229 serves as the catalytic Proton donor/acceptor.

It belongs to the aldolase class II family. AraD/FucA subfamily. Homotetramer. It depends on Zn(2+) as a cofactor.

The catalysed reaction is L-ribulose 5-phosphate = D-xylulose 5-phosphate. It functions in the pathway carbohydrate degradation; L-arabinose degradation via L-ribulose; D-xylulose 5-phosphate from L-arabinose (bacterial route): step 3/3. Its activity is regulated as follows. Inhibited by glycolohydroxamate at concentration above 0.1 mM. In terms of biological role, involved in the degradation of L-arabinose. Catalyzes the interconversion of L-ribulose 5-phosphate (LRu5P) and D-xylulose 5-phosphate (D-Xu5P) via a retroaldol/aldol mechanism (carbon-carbon bond cleavage analogous to a class II aldolase reaction). This chain is L-ribulose-5-phosphate 4-epimerase AraD, found in Escherichia coli (strain K12).